The sequence spans 180 residues: Translation initiation factor IF-3 (180 aa).

The protein belongs to the IF-3 family. Monomer.

The protein localises to the cytoplasm. Functionally, IF-3 binds to the 30S ribosomal subunit and shifts the equilibrium between 70S ribosomes and their 50S and 30S subunits in favor of the free subunits, thus enhancing the availability of 30S subunits on which protein synthesis initiation begins. This Xylella fastidiosa (strain 9a5c) protein is Translation initiation factor IF-3.